We begin with the raw amino-acid sequence, 458 residues long: UDP-N-acetylmuramate--L-alanine ligase (458 aa).

Position 118-124 (118-124) interacts with ATP; the sequence is GTHGKTT.

Belongs to the MurCDEF family.

Its subcellular location is the cytoplasm. The catalysed reaction is UDP-N-acetyl-alpha-D-muramate + L-alanine + ATP = UDP-N-acetyl-alpha-D-muramoyl-L-alanine + ADP + phosphate + H(+). The protein operates within cell wall biogenesis; peptidoglycan biosynthesis. Functionally, cell wall formation. This is UDP-N-acetylmuramate--L-alanine ligase from Clostridium botulinum (strain Loch Maree / Type A3).